A 161-amino-acid polypeptide reads, in one-letter code: UPF0178 protein Rsph17025_3122 (161 aa).

It belongs to the UPF0178 family.

In Cereibacter sphaeroides (strain ATCC 17025 / ATH 2.4.3) (Rhodobacter sphaeroides), this protein is UPF0178 protein Rsph17025_3122.